The chain runs to 328 residues: tRNA uridine(34) hydroxylase (328 aa).

A Rhodanese domain is found at leucine 130–glutamate 224. Cysteine 184 functions as the Cysteine persulfide intermediate in the catalytic mechanism.

It belongs to the TrhO family.

The catalysed reaction is uridine(34) in tRNA + AH2 + O2 = 5-hydroxyuridine(34) in tRNA + A + H2O. In terms of biological role, catalyzes oxygen-dependent 5-hydroxyuridine (ho5U) modification at position 34 in tRNAs. This chain is tRNA uridine(34) hydroxylase, found in Streptococcus pyogenes serotype M6 (strain ATCC BAA-946 / MGAS10394).